The sequence spans 170 residues: MARVEL domain-containing protein 1 (170 aa).

Residues 1-38 (MEGERPRSDTVTTTVSSHMETISLGGSIAYDRSFLRSP) are Cytoplasmic-facing. Positions 34–167 (FLRSPTGVLL…STYFSFQAWR (134 aa)) constitute an MARVEL domain. Residues 39 to 59 (TGVLLLMEIMFGLLVWALIAG) traverse the membrane as a helical segment. The Extracellular portion of the chain corresponds to 60–67 (SEYFLFSA). The chain crosses the membrane as a helical span at residues 68–88 (FGWVMFVAVFYWVLSVFFFLL). Over 89 to 102 (HLTRANTRITKVPW) the chain is Cytoplasmic. Residues 103–123 (SLVGLCFNGSAFVLYLIAAVV) traverse the membrane as a helical segment. At 124–145 (EASSVNKDVHQHHNYNSWTASS) the chain is on the extracellular side. Residues 146–166 (FFAFIVTVCYALSTYFSFQAW) form a helical membrane-spanning segment. Topologically, residues 167–170 (RTKS) are cytoplasmic.

The protein localises to the membrane. The protein resides in the nucleus. The chain is MARVEL domain-containing protein 1 (marveld1) from Xenopus laevis (African clawed frog).